Here is a 523-residue protein sequence, read N- to C-terminus: Cilia- and flagella-associated protein 157 (523 aa).

Residues 1 to 31 form a disordered region; that stretch reads MAPKKKPNKGGKEMQGKKIGGKKDASGTKTP. Basic and acidic residues predominate over residues 10–26; the sequence is GGKEMQGKKIGGKKDAS. T30 bears the Phosphothreonine mark. Coiled-coil stretches lie at residues 32–191, 248–274, and 302–371; these read ELAM…LEKK, VQLLQENEQLKGTQNKLCQQLEMLENT, and GTEE…VLIQ. Positions 419–440 are disordered; the sequence is QPDMGSHQDKQPQGLSKESQRI. Residues 429-440 are compositionally biased toward polar residues; that stretch reads QPQGLSKESQRI.

Belongs to the CFAP157 family. In terms of assembly, interacts with TUBB and TUBA4A. Interacts with CEP350. As to expression, specifically expressed in tissues containing motile cilia.

The protein localises to the cytoplasm. Its subcellular location is the cytoskeleton. It is found in the cilium basal body. Specifically required during spermatogenesis for flagellum morphogenesis and sperm motility. May be required to suppress the formation of supernumerary axonemes and ensure a correct ultrastructure. The chain is Cilia- and flagella-associated protein 157 from Mus musculus (Mouse).